The primary structure comprises 240 residues: Mannosyl-D-glycerate transport/metabolism system repressor MngR (240 aa).

Positions 4–72 (KPLYRQIADR…QGSGTYVKEE (69 aa)) constitute an HTH gntR-type domain. A DNA-binding region (H-T-H motif) is located at residues 32-51 (ESALQTEFGVSRVTVRQALR).

Functionally, represses mngA and mngB. Regulates its own expression. The sequence is that of Mannosyl-D-glycerate transport/metabolism system repressor MngR (mngR) from Escherichia coli (strain K12).